A 191-amino-acid chain; its full sequence is Crossover junction endodeoxyribonuclease RuvC (191 aa).

Active-site residues include aspartate 7, glutamate 67, and aspartate 140. Mg(2+) is bound by residues aspartate 7, glutamate 67, and aspartate 140.

Belongs to the RuvC family. As to quaternary structure, homodimer which binds Holliday junction (HJ) DNA. The HJ becomes 2-fold symmetrical on binding to RuvC with unstacked arms; it has a different conformation from HJ DNA in complex with RuvA. In the full resolvosome a probable DNA-RuvA(4)-RuvB(12)-RuvC(2) complex forms which resolves the HJ. It depends on Mg(2+) as a cofactor.

It localises to the cytoplasm. The enzyme catalyses Endonucleolytic cleavage at a junction such as a reciprocal single-stranded crossover between two homologous DNA duplexes (Holliday junction).. In terms of biological role, the RuvA-RuvB-RuvC complex processes Holliday junction (HJ) DNA during genetic recombination and DNA repair. Endonuclease that resolves HJ intermediates. Cleaves cruciform DNA by making single-stranded nicks across the HJ at symmetrical positions within the homologous arms, yielding a 5'-phosphate and a 3'-hydroxyl group; requires a central core of homology in the junction. The consensus cleavage sequence is 5'-(A/T)TT(C/G)-3'. Cleavage occurs on the 3'-side of the TT dinucleotide at the point of strand exchange. HJ branch migration catalyzed by RuvA-RuvB allows RuvC to scan DNA until it finds its consensus sequence, where it cleaves and resolves the cruciform DNA. In Pelodictyon phaeoclathratiforme (strain DSM 5477 / BU-1), this protein is Crossover junction endodeoxyribonuclease RuvC.